A 585-amino-acid polypeptide reads, in one-letter code: Parathyroid hormone/parathyroid hormone-related peptide receptor (585 aa).

Residues 1 to 26 (MGAPRISHSLALLLCCSVLSSVYALV) form the signal peptide. The Extracellular portion of the chain corresponds to 27 to 185 (DADDVITKEE…REREVFDRLG (159 aa)). 3 disulfide bridges follow: C48–C114, C105–C145, and C128–C167. The interval 69–90 (MSRSAKTKKEKPAEKLYSQAEE) is disordered. N-linked (GlcNAc...) asparagine glycans are attached at residues N148, N158, N163, and N173. A helical transmembrane segment spans residues 186 to 209 (MIYTVGYSISLGSLTVAVLILGYF). At 210–216 (RRLHCTR) the chain is on the cytoplasmic side. A helical membrane pass occupies residues 217-236 (NYIHMHLFVSFMLRAVSIFI). Residues 237–276 (KDAVLYSGVSTDEIERITEEELRAFTEPPPADKAGFVGCR) are Extracellular-facing. The chain crosses the membrane as a helical span at residues 277–300 (VAVTVFLYFLTTNYYWILVEGLYL). Residues 301–314 (HSLIFMAFFSEKKY) lie on the Cytoplasmic side of the membrane. A helical transmembrane segment spans residues 315–336 (LWGFTLFGWGLPAVFVAVWVTV). Topologically, residues 337–355 (RATLANTECWDLSSGNKKW) are extracellular. Residues 356–376 (IIQVPILAAIVVNFILFINII) traverse the membrane as a helical segment. Topologically, residues 377–403 (RVLATKLRETNAGRCDTRQQYRKLLKS) are cytoplasmic. The chain crosses the membrane as a helical span at residues 404–422 (TLVLMPLFGVHYIVFMATP). Residues 423–434 (YTEVSGILWQVQ) are Extracellular-facing. The helical transmembrane segment at 435–457 (MHYEMLFNSFQGFFVAIIYCFCN) threads the bilayer. The Cytoplasmic portion of the chain corresponds to 458 to 585 (GEVQAEIKKS…LLEEERETVM (128 aa)). The Important for interaction with G proteins signature appears at 468–471 (WSRW). Positions 531 to 585 (PGYVKHGSISENSLPSSGPEPGTKDDGYLNGSGLYEPMVGEQPPPLLEEERETVM) are disordered.

Belongs to the G-protein coupled receptor 2 family. Homodimer in the absence of bound ligand. Peptide hormone binding leads to dissociation of the homodimer. Post-translationally, N-glycosylated.

It localises to the cell membrane. Its function is as follows. G-protein-coupled receptor for parathyroid hormone (PTH) and for parathyroid hormone-related peptide (PTHLH). Ligand binding causes a conformation change that triggers signaling via guanine nucleotide-binding proteins (G proteins) and modulates the activity of downstream effectors, such as adenylate cyclase (cAMP). PTH1R is coupled to G(s) G alpha proteins and mediates activation of adenylate cyclase activity. PTHLH dissociates from PTH1R more rapidly than PTH; as consequence, the cAMP response induced by PTHLH decays faster than the response induced by PTH. The chain is Parathyroid hormone/parathyroid hormone-related peptide receptor (PTH1R) from Didelphis virginiana (North American opossum).